Here is a 454-residue protein sequence, read N- to C-terminus: Transcription factor bHLH123 (454 aa).

Residues 101-113 (SNANANTTSSTSS) are compositionally biased toward low complexity. Disordered regions lie at residues 101–127 (SNAN…HHQA), 185–228 (ATTT…QFGS), 270–348 (AAAG…KRKE), and 398–417 (GASL…VSEE). 2 stretches are compositionally biased toward polar residues: residues 185–195 (ATTTTPNSSSG) and 207–228 (SSDQ…QFGS). Residues 303 to 324 (EQPKNISEIRDSSSNEVKRGGN) show a composition bias toward basic and acidic residues. The bHLH domain occupies 334–383 (KSEAASPSPAFKRKEKMGDRIAALQQLVSPFGKTDAASVLSEAIEYIKFL).

Homodimer.

It is found in the nucleus. This Arabidopsis thaliana (Mouse-ear cress) protein is Transcription factor bHLH123 (BHLH123).